A 152-amino-acid polypeptide reads, in one-letter code: Inner membrane protein YbbJ (152 aa).

The chain crosses the membrane as a helical span at residues 1–21 (MMELMVVHPHIFWLSLGGLLL). Topologically, residues 22–31 (AAEMLGGNGY) are cytoplasmic. A helical membrane pass occupies residues 32-52 (LLWSGVAAVITGLVVWLVPLG). Topologically, residues 53–54 (WE) are periplasmic. A helical transmembrane segment spans residues 55-75 (WQGVMFAILTLLAAWLWWKWL). Over 76 to 152 (SRRVREQKHS…ITLHIRAVSS (77 aa)) the chain is Cytoplasmic.

This sequence to M.jannaschii MJ0826.

Its subcellular location is the cell inner membrane. This Escherichia coli (strain K12) protein is Inner membrane protein YbbJ (ybbJ).